The primary structure comprises 502 residues: Glycerol kinase (502 aa).

T14 contributes to the ADP binding site. 3 residues coordinate ATP: T14, T15, and S16. T14 serves as a coordination point for sn-glycerol 3-phosphate. ADP is bound at residue R18. Sn-glycerol 3-phosphate-binding residues include R84, E85, Y136, and D246. Residues R84, E85, Y136, D246, and Q247 each contribute to the glycerol site. ADP contacts are provided by T268 and G311. ATP-binding residues include T268, G311, Q315, and G412. ADP is bound by residues G412 and N416.

Belongs to the FGGY kinase family. In terms of assembly, homotetramer and homodimer (in equilibrium). Heterodimer with EIIA-Glc. Binds 1 zinc ion per glycerol kinase EIIA-Glc dimer. The zinc ion is important for dimerization.

It catalyses the reaction glycerol + ATP = sn-glycerol 3-phosphate + ADP + H(+). It participates in polyol metabolism; glycerol degradation via glycerol kinase pathway; sn-glycerol 3-phosphate from glycerol: step 1/1. Activity of this regulatory enzyme is affected by several metabolites. Allosterically and non-competitively inhibited by fructose 1,6-bisphosphate (FBP) and unphosphorylated phosphocarrier protein EIIA-Glc (III-Glc), an integral component of the bacterial phosphotransferase (PTS) system. Its function is as follows. Key enzyme in the regulation of glycerol uptake and metabolism. Catalyzes the phosphorylation of glycerol to yield sn-glycerol 3-phosphate. The chain is Glycerol kinase from Shigella dysenteriae serotype 1 (strain Sd197).